The chain runs to 302 residues: Succinate--CoA ligase [ADP-forming] subunit alpha (302 aa).

CoA-binding positions include 17-20 (TGST), lysine 43, and 96-98 (ITE). Residue tyrosine 159 participates in substrate binding. Residue histidine 247 is the Tele-phosphohistidine intermediate of the active site.

The protein belongs to the succinate/malate CoA ligase alpha subunit family. As to quaternary structure, heterotetramer of two alpha and two beta subunits.

The catalysed reaction is succinate + ATP + CoA = succinyl-CoA + ADP + phosphate. The enzyme catalyses GTP + succinate + CoA = succinyl-CoA + GDP + phosphate. It functions in the pathway carbohydrate metabolism; tricarboxylic acid cycle; succinate from succinyl-CoA (ligase route): step 1/1. Succinyl-CoA synthetase functions in the citric acid cycle (TCA), coupling the hydrolysis of succinyl-CoA to the synthesis of either ATP or GTP and thus represents the only step of substrate-level phosphorylation in the TCA. The alpha subunit of the enzyme binds the substrates coenzyme A and phosphate, while succinate binding and nucleotide specificity is provided by the beta subunit. This Staphylococcus aureus (strain MRSA252) protein is Succinate--CoA ligase [ADP-forming] subunit alpha.